Reading from the N-terminus, the 147-residue chain is UPF0735 ACT domain-containing protein BH1214 (147 aa).

An ACT domain is found at 70–145 (TLSINLEDRS…AVEKVELVGS (76 aa)).

Belongs to the UPF0735 family.

The chain is UPF0735 ACT domain-containing protein BH1214 from Halalkalibacterium halodurans (strain ATCC BAA-125 / DSM 18197 / FERM 7344 / JCM 9153 / C-125) (Bacillus halodurans).